Consider the following 328-residue polypeptide: Alanine racemase (328 aa).

Lys-33 (proton acceptor; specific for D-alanine) is an active-site residue. Lys-33 is modified (N6-(pyridoxal phosphate)lysine). Residue Arg-118 participates in substrate binding. The active-site Proton acceptor; specific for L-alanine is Tyr-237. Substrate is bound at residue Met-283.

It belongs to the alanine racemase family. It depends on pyridoxal 5'-phosphate as a cofactor.

It catalyses the reaction L-alanine = D-alanine. Its pathway is amino-acid biosynthesis; D-alanine biosynthesis; D-alanine from L-alanine: step 1/1. In terms of biological role, catalyzes the interconversion of L-alanine and D-alanine. May also act on other amino acids. This chain is Alanine racemase (alr), found in Campylobacter jejuni subsp. doylei (strain ATCC BAA-1458 / RM4099 / 269.97).